A 156-amino-acid chain; its full sequence is ATP synthase subunit b (156 aa).

Residues 11–31 (AIAFVLFVLFCMKYVWPPLMA) traverse the membrane as a helical segment.

This sequence belongs to the ATPase B chain family. F-type ATPases have 2 components, F(1) - the catalytic core - and F(0) - the membrane proton channel. F(1) has five subunits: alpha(3), beta(3), gamma(1), delta(1), epsilon(1). F(0) has three main subunits: a(1), b(2) and c(10-14). The alpha and beta chains form an alternating ring which encloses part of the gamma chain. F(1) is attached to F(0) by a central stalk formed by the gamma and epsilon chains, while a peripheral stalk is formed by the delta and b chains.

It is found in the cell inner membrane. F(1)F(0) ATP synthase produces ATP from ADP in the presence of a proton or sodium gradient. F-type ATPases consist of two structural domains, F(1) containing the extramembraneous catalytic core and F(0) containing the membrane proton channel, linked together by a central stalk and a peripheral stalk. During catalysis, ATP synthesis in the catalytic domain of F(1) is coupled via a rotary mechanism of the central stalk subunits to proton translocation. In terms of biological role, component of the F(0) channel, it forms part of the peripheral stalk, linking F(1) to F(0). The sequence is that of ATP synthase subunit b from Shigella boydii serotype 18 (strain CDC 3083-94 / BS512).